The primary structure comprises 283 residues: Ribosomal RNA small subunit methyltransferase A (283 aa).

Asparagine 29, leucine 31, glycine 56, glutamate 77, aspartate 102, and asparagine 123 together coordinate S-adenosyl-L-methionine.

This sequence belongs to the class I-like SAM-binding methyltransferase superfamily. rRNA adenine N(6)-methyltransferase family. RsmA subfamily.

It localises to the cytoplasm. The catalysed reaction is adenosine(1518)/adenosine(1519) in 16S rRNA + 4 S-adenosyl-L-methionine = N(6)-dimethyladenosine(1518)/N(6)-dimethyladenosine(1519) in 16S rRNA + 4 S-adenosyl-L-homocysteine + 4 H(+). Its function is as follows. Specifically dimethylates two adjacent adenosines (A1518 and A1519) in the loop of a conserved hairpin near the 3'-end of 16S rRNA in the 30S particle. May play a critical role in biogenesis of 30S subunits. The chain is Ribosomal RNA small subunit methyltransferase A from Acidobacterium capsulatum (strain ATCC 51196 / DSM 11244 / BCRC 80197 / JCM 7670 / NBRC 15755 / NCIMB 13165 / 161).